An 891-amino-acid chain; its full sequence is UPF0182 protein Glov_0814 (891 aa).

7 helical membrane passes run 6 to 26, 51 to 71, 102 to 122, 164 to 184, 202 to 222, 244 to 264, and 266 to 286; these read LTPILFALFIIVPALTYLLAY, GIGVLFGGLLFAFLVPNLLYA, IGVLIAAGIALFVGQFGALQW, FMLLATLLVTLLVYYIRGGIA, ILLALFSCVIAAGFYLEGFGL, TLTTLAFITPVAGLLLAFGLW, and GTWRLVLLPPIVVVAAYMIGM.

Belongs to the UPF0182 family.

The protein localises to the cell membrane. The protein is UPF0182 protein Glov_0814 of Trichlorobacter lovleyi (strain ATCC BAA-1151 / DSM 17278 / SZ) (Geobacter lovleyi).